The primary structure comprises 92 residues: RNA-binding protein Hfq (92 aa).

The Sm domain occupies 9-68 (DPFLNALRRERVPVSVYLVNGIKLQGTIESFDQFVVLLRNTVSQMVYKHAISTVVPARNV).

Belongs to the Hfq family. As to quaternary structure, homohexamer.

Functionally, RNA chaperone that binds small regulatory RNA (sRNAs) and mRNAs to facilitate mRNA translational regulation in response to envelope stress, environmental stress and changes in metabolite concentrations. Also binds with high specificity to tRNAs. In Xylella fastidiosa (strain M12), this protein is RNA-binding protein Hfq.